Consider the following 370-residue polypeptide: 3-isopropylmalate dehydrogenase (370 aa).

Gly77–Glu90 serves as a coordination point for NAD(+). Substrate contacts are provided by Arg97, Arg107, Arg135, and Asp226. Residues Asp226, Asp250, and Asp254 each contribute to the Mg(2+) site. Gly290–Asn302 lines the NAD(+) pocket.

This sequence belongs to the isocitrate and isopropylmalate dehydrogenases family. LeuB type 1 subfamily. Homodimer. It depends on Mg(2+) as a cofactor. Requires Mn(2+) as cofactor.

The protein resides in the cytoplasm. It catalyses the reaction (2R,3S)-3-isopropylmalate + NAD(+) = 4-methyl-2-oxopentanoate + CO2 + NADH. It functions in the pathway amino-acid biosynthesis; L-leucine biosynthesis; L-leucine from 3-methyl-2-oxobutanoate: step 3/4. In terms of biological role, catalyzes the oxidation of 3-carboxy-2-hydroxy-4-methylpentanoate (3-isopropylmalate) to 3-carboxy-4-methyl-2-oxopentanoate. The product decarboxylates to 4-methyl-2 oxopentanoate. The protein is 3-isopropylmalate dehydrogenase of Rhizobium johnstonii (strain DSM 114642 / LMG 32736 / 3841) (Rhizobium leguminosarum bv. viciae).